We begin with the raw amino-acid sequence, 420 residues long: Calreticulin (420 aa).

Positions 1-25 (MAIRKGSSYAVAALLALASVAAVAG) are cleaved as a signal peptide. Residue Asn-57 is glycosylated (N-linked (GlcNAc...) asparagine). 4 residues coordinate an alpha-D-glucoside: Tyr-115, Lys-117, Tyr-134, and Asp-141. 7 consecutive repeat copies span residues 197–208 (KHTGSIYEHWDI), 216–227 (DPEAKKPEDWDD), 233–244 (DPEDKKPEGYDD), 251–262 (DPDAKKPEDWDD), 266–276 (GEWTAPTIPNP), 280–290 (GPWKQKKIKNP), and 294–304 (GKWKAPMIDNP). The segment at 197–262 (KHTGSIYEHW…DAKKPEDWDD (66 aa)) is 4 X approximate repeats. The segment covering 213-258 (KIKDPEAKKPEDWDDKEYIPDPEDKKPEGYDDIPKEIPDPDAKKPE) has biased composition (basic and acidic residues). The disordered stretch occupies residues 213-285 (KIKDPEAKKP…PEYKGPWKQK (73 aa)). A 3 X approximate repeats region spans residues 266-304 (GEWTAPTIPNPEYKGPWKQKKIKNPNYQGKWKAPMIDNP). An alpha-D-glucoside is bound at residue Glu-324. Over residues 355–381 (GKHKEAEKAAFDEAEKKKEEEDAAKGG) the composition is skewed to basic and acidic residues. Positions 355–420 (GKHKEAEKAA…DSDDEKHDEL (66 aa)) are disordered. Residues 382 to 402 (DDEDDDLEDEEDDEKADEDKA) show a composition bias toward acidic residues. Residues 403-420 (DSDAEDGKDSDDEKHDEL) show a composition bias toward basic and acidic residues. The Prevents secretion from ER motif lies at 417 to 420 (HDEL).

It belongs to the calreticulin family.

It is found in the endoplasmic reticulum lumen. Its function is as follows. Molecular calcium-binding chaperone promoting folding, oligomeric assembly and quality control in the ER via the calreticulin/calnexin cycle. This lectin may interact transiently with almost all of the monoglucosylated glycoproteins that are synthesized in the ER. This Zea mays (Maize) protein is Calreticulin (CRT).